Consider the following 1165-residue polypeptide: TBC1 domain family member 1 (1165 aa).

Ser-146 bears the Phosphoserine mark. Residues 207–234 (FSSDQSRSALQPPGDGERGPRPMRKSFS) form a disordered region. Residue Ser-232 is modified to Phosphoserine; by PKB/AKT1. Ser-234 carries the post-translational modification Phosphoserine; by AMPK. Residues 243–401 (FRKEFQDAGL…LHKLCERIEG (159 aa)) form the PID domain. At Ser-500 the chain carries Phosphoserine. Thr-502 carries the phosphothreonine; by PKB/AKT1 modification. A phosphoserine mark is found at Ser-504, Ser-522, Ser-524, Ser-562, Ser-563, Ser-567, Ser-568, and Ser-582. Thr-593 is modified (phosphothreonine). Ser-611 bears the Phosphoserine mark. Ser-624 bears the Phosphoserine; by PKB/AKT1 mark. Residues 624 to 651 (SVSTETPHERKDFESKADHISDASRTPV) form a disordered region. The span at 629–645 (TPHERKDFESKADHISD) shows a compositional bias: basic and acidic residues. A phosphoserine mark is found at Ser-692 and Ser-938. Residues 797–991 (GVPRHHRGEI…RVFDMIFLQG (195 aa)) enclose the Rab-GAP TBC domain. Tyr-949 bears the Phosphotyrosine mark. Positions 1146–1165 (QTAELGSQESDPTLPKPSGD) are disordered.

As to quaternary structure, interacts with APPL2 (via BAR domain); interaction is dependent of TBC1D1 phosphorylation at Ser-232; interaction diminishes the phosphorylation of TBC1D1 at Thr-593, resulting in inhibition of SLC2A4/GLUT4 translocation and glucose uptake. Insulin-stimulated phosphorylation by AKT family kinases stimulates SLC2A4/GLUT4 translocation.

Its subcellular location is the nucleus. May act as a GTPase-activating protein for Rab family protein(s). May play a role in the cell cycle and differentiation of various tissues. Involved in the trafficking and translocation of GLUT4-containing vesicles and insulin-stimulated glucose uptake into cells. The polypeptide is TBC1 domain family member 1 (TBC1D1) (Bos taurus (Bovine)).